Here is a 770-residue protein sequence, read N- to C-terminus: PH and SEC7 domain-containing protein 2 (770 aa).

The span at 1–24 (MDEEKLPCELHKEGSATQEDHGLE) shows a compositional bias: basic and acidic residues. Disordered stretches follow at residues 1-65 (MDEE…RGPD) and 181-304 (IQQR…ANGC). Over residues 32 to 45 (QNGTAASEGLSSHI) the composition is skewed to polar residues. S188 is subject to Phosphoserine. Low complexity-rich tracts occupy residues 216–234 (LGSP…NVLS) and 285–296 (ELSSSEGLEPGS). Residues 256–459 (DDEDDEDTDK…KTLYNSIKNE (204 aa)) form the SEC7 domain. Residues 509–622 (TTYKHGVLTR…WILRINLVAA (114 aa)) form the PH domain. A helical membrane pass occupies residues 619–636 (LVAAIFSAPAFPAAVSSM). A coiled-coil region spans residues 650-677 (RLCQEEQLRSHENKLRQVTAELAEHRCH). Residues 738–770 (PALRKTHSSPALSLGHGPVTGSKATKDTSASDT) form a disordered region.

This sequence belongs to the PSD family.

The protein resides in the cell membrane. It localises to the cell projection. It is found in the ruffle membrane. Its subcellular location is the cleavage furrow. The sequence is that of PH and SEC7 domain-containing protein 2 (Psd2) from Mus musculus (Mouse).